Reading from the N-terminus, the 615-residue chain is RUN domain-containing protein 1 (615 aa).

The tract at residues 15–41 (TAVGPKAKDEEEEEEEEESLPPCETVR) is disordered. A compositionally biased stretch (acidic residues) spans 24–33 (EEEEEEEEES). Serine 73 is subject to Phosphoserine. Coiled-coil stretches lie at residues 76-102 (DATV…LSSH) and 163-238 (RVRG…NLNE). The segment at 147–180 (DPCGGDESDVLPGDRPRVRGEDQSEQEKRERLET) is disordered. Residues 158 to 180 (PGDRPRVRGEDQSEQEKRERLET) are compositionally biased toward basic and acidic residues. The RUN domain occupies 423–604 (ELTTVVRKEL…LKFSLPVDLA (182 aa)). Phosphoserine is present on serine 499.

Its function is as follows. May play a role as p53/TP53 inhibitor and thus may have oncogenic activity. This Mus musculus (Mouse) protein is RUN domain-containing protein 1 (Rundc1).